Reading from the N-terminus, the 509-residue chain is Cysteine--tRNA ligase (509 aa).

Zn(2+) is bound at residue cysteine 19. The short motif at 21 to 31 (PTVYNDAHIGH) is the 'HIGH' region element. Cysteine 213, histidine 238, and glutamate 242 together coordinate Zn(2+). The short motif at 284 to 288 (KMSKS) is the 'KMSKS' region element. An ATP-binding site is contributed by lysine 287.

The protein belongs to the class-I aminoacyl-tRNA synthetase family. The cofactor is Zn(2+).

The enzyme catalyses tRNA(Cys) + L-cysteine + ATP = L-cysteinyl-tRNA(Cys) + AMP + diphosphate. This Acanthamoeba polyphaga (Amoeba) protein is Cysteine--tRNA ligase (CARS).